The following is a 380-amino-acid chain: Queuine tRNA-ribosyltransferase (380 aa).

Catalysis depends on D96, which acts as the Proton acceptor. Substrate is bound by residues D96–F100, D150, Q193, and G220. The RNA binding stretch occupies residues G251–S257. Catalysis depends on D270, which acts as the Nucleophile. The segment at T275–R279 is RNA binding; important for wobble base 34 recognition. Positions 308, 310, 313, and 339 each coordinate Zn(2+).

This sequence belongs to the queuine tRNA-ribosyltransferase family. As to quaternary structure, homodimer. Within each dimer, one monomer is responsible for RNA recognition and catalysis, while the other monomer binds to the replacement base PreQ1. The cofactor is Zn(2+).

The enzyme catalyses 7-aminomethyl-7-carbaguanine + guanosine(34) in tRNA = 7-aminomethyl-7-carbaguanosine(34) in tRNA + guanine. Its pathway is tRNA modification; tRNA-queuosine biosynthesis. In terms of biological role, catalyzes the base-exchange of a guanine (G) residue with the queuine precursor 7-aminomethyl-7-deazaguanine (PreQ1) at position 34 (anticodon wobble position) in tRNAs with GU(N) anticodons (tRNA-Asp, -Asn, -His and -Tyr). Catalysis occurs through a double-displacement mechanism. The nucleophile active site attacks the C1' of nucleotide 34 to detach the guanine base from the RNA, forming a covalent enzyme-RNA intermediate. The proton acceptor active site deprotonates the incoming PreQ1, allowing a nucleophilic attack on the C1' of the ribose to form the product. After dissociation, two additional enzymatic reactions on the tRNA convert PreQ1 to queuine (Q), resulting in the hypermodified nucleoside queuosine (7-(((4,5-cis-dihydroxy-2-cyclopenten-1-yl)amino)methyl)-7-deazaguanosine). In Streptococcus pyogenes serotype M6 (strain ATCC BAA-946 / MGAS10394), this protein is Queuine tRNA-ribosyltransferase.